Consider the following 447-residue polypeptide: Ribulose bisphosphate carboxylase large chain (447 aa).

The substrate site is built by asparagine 89 and threonine 139. Residue lysine 141 is the Proton acceptor of the active site. Lysine 143 contributes to the substrate binding site. Mg(2+)-binding residues include lysine 167, aspartate 169, and glutamate 170. At lysine 167 the chain carries N6-carboxylysine. The active-site Proton acceptor is the histidine 260. Substrate-binding residues include arginine 261, histidine 293, and serine 345.

Belongs to the RuBisCO large chain family. Type I subfamily. Heterohexadecamer of 8 large chains and 8 small chains; disulfide-linked. The disulfide link is formed within the large subunit homodimers. Mg(2+) is required as a cofactor. Post-translationally, the disulfide bond which can form in the large chain dimeric partners within the hexadecamer appears to be associated with oxidative stress and protein turnover.

The protein localises to the plastid. Its subcellular location is the chloroplast. The enzyme catalyses 2 (2R)-3-phosphoglycerate + 2 H(+) = D-ribulose 1,5-bisphosphate + CO2 + H2O. It catalyses the reaction D-ribulose 1,5-bisphosphate + O2 = 2-phosphoglycolate + (2R)-3-phosphoglycerate + 2 H(+). In terms of biological role, ruBisCO catalyzes two reactions: the carboxylation of D-ribulose 1,5-bisphosphate, the primary event in carbon dioxide fixation, as well as the oxidative fragmentation of the pentose substrate in the photorespiration process. Both reactions occur simultaneously and in competition at the same active site. This Convolvulus tricolor (Dwarf morning glory) protein is Ribulose bisphosphate carboxylase large chain.